The primary structure comprises 421 residues: MDKLIITGGNRLDGEIRISGAKNSALPILAATLLADTPVTVCNLPHLHDITTMIELFGRMGVQPIIDEKLNVEVDASSIKTLVAPYELVKTMRASILVLGPMLARFGEAEVALPGGCAIGSRPVDLHIRGLEAMGAQIEVEGGYIKAKAPVGGLHGGQFFFDTVSVTGTENLMMAAALANGRTVLQNAAREPEVVDLANCLNAMGANVQGAGSDTIVIDGVKRLGGARYDVLPDRIETGTYLVAAAATGGRVKLKDTDPTILEAVLQKLEEAGAHINTGNNWIELDMKGNRPKAVNIRTAPYPAFPTDMQAQFISMNAVAEGTGAVIETVFENRFMHVYEMNRMGAQILVEGNTAIVTGVPRLKGAPVMATDLRASASLVIAGLVAEGDTLIDRIYHIDRGYECIEEKLQLLGAKIRRVPG.

Phosphoenolpyruvate is bound at residue 22-23; that stretch reads KN. UDP-N-acetyl-alpha-D-glucosamine is bound at residue Arg93. Cys117 serves as the catalytic Proton donor. Cys117 bears the 2-(S-cysteinyl)pyruvic acid O-phosphothioketal mark. Residues 122–126, Asp308, and Val330 contribute to the UDP-N-acetyl-alpha-D-glucosamine site; that span reads RPVDL.

Belongs to the EPSP synthase family. MurA subfamily.

It is found in the cytoplasm. The enzyme catalyses phosphoenolpyruvate + UDP-N-acetyl-alpha-D-glucosamine = UDP-N-acetyl-3-O-(1-carboxyvinyl)-alpha-D-glucosamine + phosphate. The protein operates within cell wall biogenesis; peptidoglycan biosynthesis. Functionally, cell wall formation. Adds enolpyruvyl to UDP-N-acetylglucosamine. This chain is UDP-N-acetylglucosamine 1-carboxyvinyltransferase, found in Pseudomonas paraeruginosa (strain DSM 24068 / PA7) (Pseudomonas aeruginosa (strain PA7)).